Reading from the N-terminus, the 89-residue chain is Small ribosomal subunit protein uS15 (89 aa).

The protein belongs to the universal ribosomal protein uS15 family. As to quaternary structure, part of the 30S ribosomal subunit. Forms a bridge to the 50S subunit in the 70S ribosome, contacting the 23S rRNA.

Functionally, one of the primary rRNA binding proteins, it binds directly to 16S rRNA where it helps nucleate assembly of the platform of the 30S subunit by binding and bridging several RNA helices of the 16S rRNA. Forms an intersubunit bridge (bridge B4) with the 23S rRNA of the 50S subunit in the ribosome. This chain is Small ribosomal subunit protein uS15, found in Streptococcus suis (strain 98HAH33).